Reading from the N-terminus, the 222-residue chain is Vesicle-associated membrane protein 724 (222 aa).

Residues 1–197 (MGQESFIYSF…LWYQNMKIKL (197 aa)) are Cytoplasmic-facing. In terms of domain architecture, Longin spans 10–115 (FVARGTMILA…SLNKEFGPVM (106 aa)). Residues 131 to 191 (KLIKVKAQVS…TQVRRKLWYQ (61 aa)) form the v-SNARE coiled-coil homology domain. A helical; Anchor for type IV membrane protein transmembrane segment spans residues 198–218 (VVLGILLLLVLIIWISVCHGF). At 219 to 222 (NCTD) the chain is on the vesicular side.

The protein belongs to the synaptobrevin family. Expressed in flowers, leaves, stems and roots.

Its subcellular location is the cell membrane. It localises to the early endosome membrane. Involved in the targeting and/or fusion of transport vesicles to their target membrane. The protein is Vesicle-associated membrane protein 724 of Arabidopsis thaliana (Mouse-ear cress).